A 166-amino-acid chain; its full sequence is Protein-export protein SecB (166 aa).

The protein belongs to the SecB family. As to quaternary structure, homotetramer, a dimer of dimers. One homotetramer interacts with 1 SecA dimer.

It is found in the cytoplasm. Its function is as follows. One of the proteins required for the normal export of preproteins out of the cell cytoplasm. It is a molecular chaperone that binds to a subset of precursor proteins, maintaining them in a translocation-competent state. It also specifically binds to its receptor SecA. This is Protein-export protein SecB from Cereibacter sphaeroides (strain ATCC 17025 / ATH 2.4.3) (Rhodobacter sphaeroides).